A 61-amino-acid polypeptide reads, in one-letter code: Small ribosomal subunit protein uS14B (61 aa).

Residues C24, C27, C40, and C43 each coordinate Zn(2+).

This sequence belongs to the universal ribosomal protein uS14 family. Zinc-binding uS14 subfamily. In terms of assembly, part of the 30S ribosomal subunit. Contacts proteins S3 and S10. It depends on Zn(2+) as a cofactor.

Binds 16S rRNA, required for the assembly of 30S particles and may also be responsible for determining the conformation of the 16S rRNA at the A site. The chain is Small ribosomal subunit protein uS14B from Nocardia farcinica (strain IFM 10152).